The sequence spans 277 residues: Large ribosomal subunit protein uL2 (277 aa).

Positions 222–258 are disordered; sequence GSVMNPCDHPHGGGEGRSPIGRPSPVTPWGKPALGYK.

It belongs to the universal ribosomal protein uL2 family. Part of the 50S ribosomal subunit. Forms a bridge to the 30S subunit in the 70S ribosome.

Its function is as follows. One of the primary rRNA binding proteins. Required for association of the 30S and 50S subunits to form the 70S ribosome, for tRNA binding and peptide bond formation. It has been suggested to have peptidyltransferase activity; this is somewhat controversial. Makes several contacts with the 16S rRNA in the 70S ribosome. In Clostridium perfringens (strain 13 / Type A), this protein is Large ribosomal subunit protein uL2.